A 409-amino-acid chain; its full sequence is Arginine biosynthesis bifunctional protein ArgJ (409 aa).

6 residues coordinate substrate: threonine 157, lysine 183, threonine 194, glutamate 281, asparagine 404, and serine 409. Threonine 194 acts as the Nucleophile in catalysis.

The protein belongs to the ArgJ family. Heterotetramer of two alpha and two beta chains.

It is found in the cytoplasm. The enzyme catalyses N(2)-acetyl-L-ornithine + L-glutamate = N-acetyl-L-glutamate + L-ornithine. It catalyses the reaction L-glutamate + acetyl-CoA = N-acetyl-L-glutamate + CoA + H(+). The protein operates within amino-acid biosynthesis; L-arginine biosynthesis; L-ornithine and N-acetyl-L-glutamate from L-glutamate and N(2)-acetyl-L-ornithine (cyclic): step 1/1. It functions in the pathway amino-acid biosynthesis; L-arginine biosynthesis; N(2)-acetyl-L-ornithine from L-glutamate: step 1/4. Its function is as follows. Catalyzes two activities which are involved in the cyclic version of arginine biosynthesis: the synthesis of N-acetylglutamate from glutamate and acetyl-CoA as the acetyl donor, and of ornithine by transacetylation between N(2)-acetylornithine and glutamate. The protein is Arginine biosynthesis bifunctional protein ArgJ of Zymomonas mobilis subsp. mobilis (strain ATCC 31821 / ZM4 / CP4).